Reading from the N-terminus, the 162-residue chain is Zinc finger protein 593 homolog (162 aa).

The segment at 59-83 (FYCVHCAKYFIDDTAMQAHFRTKVH) adopts a C2H2-type zinc-finger fold. The tract at residues 110-162 (VKPKKRAMETQPSKEDVVAGKRIRVEVVPEDTDATDSPSTSKTKRKKVEKMET) is disordered. The segment covering 115–136 (RAMETQPSKEDVVAGKRIRVEV) has biased composition (basic and acidic residues). Over residues 151–162 (KTKRKKVEKMET) the composition is skewed to basic residues.

This sequence belongs to the ZNF593/BUD20 C2H2-type zinc-finger protein family. In terms of assembly, associates with pre-60S ribosomal particles; released from the pre-60S particle very early in the cytoplasm.

Its subcellular location is the nucleus. The protein resides in the cytoplasm. Its function is as follows. Involved in pre-60S ribosomal particles maturation by promoting the nuclear export of the 60S ribosome. The protein is Zinc finger protein 593 homolog of Drosophila melanogaster (Fruit fly).